The following is a 316-amino-acid chain: 4-hydroxy-3-methylbut-2-enyl diphosphate reductase (316 aa).

Cys12 is a binding site for [4Fe-4S] cluster. Positions 41 and 74 each coordinate (2E)-4-hydroxy-3-methylbut-2-enyl diphosphate. His41 and His74 together coordinate dimethylallyl diphosphate. His41 and His74 together coordinate isopentenyl diphosphate. Residue Cys96 coordinates [4Fe-4S] cluster. His124 contacts (2E)-4-hydroxy-3-methylbut-2-enyl diphosphate. Dimethylallyl diphosphate is bound at residue His124. His124 lines the isopentenyl diphosphate pocket. The Proton donor role is filled by Glu126. Thr169 serves as a coordination point for (2E)-4-hydroxy-3-methylbut-2-enyl diphosphate. Cys199 contributes to the [4Fe-4S] cluster binding site. (2E)-4-hydroxy-3-methylbut-2-enyl diphosphate is bound by residues Ser227, Ser228, Asn229, and Ser271. Ser227, Ser228, Asn229, and Ser271 together coordinate dimethylallyl diphosphate. Ser227, Ser228, Asn229, and Ser271 together coordinate isopentenyl diphosphate.

This sequence belongs to the IspH family. Requires [4Fe-4S] cluster as cofactor.

The catalysed reaction is isopentenyl diphosphate + 2 oxidized [2Fe-2S]-[ferredoxin] + H2O = (2E)-4-hydroxy-3-methylbut-2-enyl diphosphate + 2 reduced [2Fe-2S]-[ferredoxin] + 2 H(+). It catalyses the reaction dimethylallyl diphosphate + 2 oxidized [2Fe-2S]-[ferredoxin] + H2O = (2E)-4-hydroxy-3-methylbut-2-enyl diphosphate + 2 reduced [2Fe-2S]-[ferredoxin] + 2 H(+). The protein operates within isoprenoid biosynthesis; dimethylallyl diphosphate biosynthesis; dimethylallyl diphosphate from (2E)-4-hydroxy-3-methylbutenyl diphosphate: step 1/1. It participates in isoprenoid biosynthesis; isopentenyl diphosphate biosynthesis via DXP pathway; isopentenyl diphosphate from 1-deoxy-D-xylulose 5-phosphate: step 6/6. In terms of biological role, catalyzes the conversion of 1-hydroxy-2-methyl-2-(E)-butenyl 4-diphosphate (HMBPP) into a mixture of isopentenyl diphosphate (IPP) and dimethylallyl diphosphate (DMAPP). Acts in the terminal step of the DOXP/MEP pathway for isoprenoid precursor biosynthesis. The sequence is that of 4-hydroxy-3-methylbut-2-enyl diphosphate reductase from Stenotrophomonas maltophilia (strain R551-3).